The chain runs to 123 residues: Small ribosomal subunit protein uS12 (123 aa).

Positions 1–32 (MPTINQLIRKPREAQKARDKAPALQSSPQKRG) are disordered. Residues 10-21 (KPREAQKARDKA) are compositionally biased toward basic and acidic residues. Asp-89 is modified (3-methylthioaspartic acid).

The protein belongs to the universal ribosomal protein uS12 family. In terms of assembly, part of the 30S ribosomal subunit. Contacts proteins S8 and S17. May interact with IF1 in the 30S initiation complex.

Functionally, with S4 and S5 plays an important role in translational accuracy. Interacts with and stabilizes bases of the 16S rRNA that are involved in tRNA selection in the A site and with the mRNA backbone. Located at the interface of the 30S and 50S subunits, it traverses the body of the 30S subunit contacting proteins on the other side and probably holding the rRNA structure together. The combined cluster of proteins S8, S12 and S17 appears to hold together the shoulder and platform of the 30S subunit. The sequence is that of Small ribosomal subunit protein uS12 from Azorhizobium caulinodans (strain ATCC 43989 / DSM 5975 / JCM 20966 / LMG 6465 / NBRC 14845 / NCIMB 13405 / ORS 571).